A 201-amino-acid chain; its full sequence is uncharacterized protein (201 aa).

The first 19 residues, 1–19 (MKLIVSVFLIGCQFLNILG), serve as a signal peptide directing secretion.

This is an uncharacterized protein from Acheta domesticus (House cricket).